The chain runs to 48 residues: Disintegrin accutin (48 aa).

Position 1 is a pyrrolidone carboxylic acid (glutamine 1). The Disintegrin domain maps to 1-48 (QGAQCTAGPCCWPCKFLKEGTICRRARGDDLDDYCNGISADCPRNPYY). 3 disulfides stabilise this stretch: cysteine 5/cysteine 11, cysteine 10/cysteine 35, and cysteine 23/cysteine 42. The short motif at 27–29 (RGD) is the Cell attachment site element.

It belongs to the venom metalloproteinase (M12B) family. P-II subfamily. P-IIa sub-subfamily. As to quaternary structure, monomer (disintegrin). In terms of tissue distribution, expressed by the venom gland.

Its subcellular location is the secreted. In terms of biological role, inhibit human platelet aggregation induced by ADP, collagen, thrombin or the thromboxane analog U46619 in platelet suspension with IC(50) values of 66-267 nM. Acts by inhibiting fibrinogen interaction with platelet receptors GPIIb/GPIIIa (ITGA2B/ITGB3). It also inhibits angiogenesis in vivo and in vitro by blocking integrin alpha-V/beta-3 (ITGAV/ITGB3) of endothelial cells and by inducing apoptosis. The polypeptide is Disintegrin accutin (Deinagkistrodon acutus (Hundred-pace snake)).